The chain runs to 108 residues: uncharacterized protein (108 aa).

The helical transmembrane segment at N59–I81 threads the bilayer.

It is found in the membrane. This is an uncharacterized protein from Rickettsia conorii (strain ATCC VR-613 / Malish 7).